A 392-amino-acid polypeptide reads, in one-letter code: Chaperone protein DnaJ (392 aa).

Positions 2-67 (DYYTILGVAK…QKRESYDRYG (66 aa)) constitute a J domain. A CR-type zinc finger spans residues 149-227 (GVEKELLVSG…CRGQGRIKDK (79 aa)). Cys-162, Cys-165, Cys-179, Cys-182, Cys-201, Cys-204, Cys-215, and Cys-218 together coordinate Zn(2+). CXXCXGXG motif repeat units follow at residues 162 to 169 (CDACSGSG), 179 to 186 (CDRCKGSG), 201 to 208 (CPDCSGEG), and 215 to 222 (CSECRGQG).

The protein belongs to the DnaJ family. Homodimer. Requires Zn(2+) as cofactor.

The protein resides in the cytoplasm. Its function is as follows. Participates actively in the response to hyperosmotic and heat shock by preventing the aggregation of stress-denatured proteins and by disaggregating proteins, also in an autonomous, DnaK-independent fashion. Unfolded proteins bind initially to DnaJ; upon interaction with the DnaJ-bound protein, DnaK hydrolyzes its bound ATP, resulting in the formation of a stable complex. GrpE releases ADP from DnaK; ATP binding to DnaK triggers the release of the substrate protein, thus completing the reaction cycle. Several rounds of ATP-dependent interactions between DnaJ, DnaK and GrpE are required for fully efficient folding. Also involved, together with DnaK and GrpE, in the DNA replication of plasmids through activation of initiation proteins. The polypeptide is Chaperone protein DnaJ (Chlamydia muridarum (strain MoPn / Nigg)).